The primary structure comprises 266 residues: Gasdermin bGSDM (266 aa).

4 consecutive transmembrane segments (beta stranded) span residues 67 to 83 (LQQN…GVDI), 95 to 113 (KLRG…ISYQ), 162 to 179 (SFSV…DLEA), and 187 to 203 (ADVN…LMEY).

This sequence belongs to the bacterial gasdermin family. In terms of assembly, monomer. Forms large, homooligomeric ring-shaped pores when inserted in membranes.

The protein resides in the cytoplasm. It is found in the cell inner membrane. With respect to regulation, the full-length protein before cleavage is inactive: intramolecular interactions between the N-terminal domain and the C-terminal region mediate autoinhibition. The pyroptosis-like-inducing activity is carried by the released N-terminal domain (Gasdermin bGSDM, N-terminus). Precursor of a pore-forming protein involved in defense against bacteriophages. Expression of bGSDM and the neighboring protease gene (Gilli_2517) is not toxic in E.coli. Cleavage of this precursor by its dedicated protease releases the active moiety (gasdermin bGSDM, N-terminus) which inserts into membranes, forming pores and triggering cell death. In terms of biological role, pore-forming protein that causes membrane permeabilization via a pyroptosis-like activity. Makes ring-like pores when released. This Gillisia limnaea (strain DSM 15749 / LMG 21470 / R-8282) protein is Gasdermin bGSDM.